The following is a 292-amino-acid chain: Mycothiol acetyltransferase (292 aa).

N-acetyltransferase domains lie at 13-168 (ALDR…KWLQ) and 159-292 (KSVA…VYEK). Residue Glu40 coordinates 1D-myo-inositol 2-(L-cysteinylamino)-2-deoxy-alpha-D-glucopyranoside. 77–79 (LAV) provides a ligand contact to acetyl-CoA. Positions 179, 218, and 226 each coordinate 1D-myo-inositol 2-(L-cysteinylamino)-2-deoxy-alpha-D-glucopyranoside. Residues 230–232 (VGL) and 237–243 (RGRGLGD) contribute to the acetyl-CoA site. Tyr264 contributes to the 1D-myo-inositol 2-(L-cysteinylamino)-2-deoxy-alpha-D-glucopyranoside binding site.

Belongs to the acetyltransferase family. MshD subfamily. Monomer.

It catalyses the reaction 1D-myo-inositol 2-(L-cysteinylamino)-2-deoxy-alpha-D-glucopyranoside + acetyl-CoA = mycothiol + CoA + H(+). Catalyzes the transfer of acetyl from acetyl-CoA to desacetylmycothiol (Cys-GlcN-Ins) to form mycothiol. This Corynebacterium glutamicum (strain R) protein is Mycothiol acetyltransferase.